Here is a 247-residue protein sequence, read N- to C-terminus: Segregation and condensation protein A (247 aa).

Belongs to the ScpA family. As to quaternary structure, component of a cohesin-like complex composed of ScpA, ScpB and the Smc homodimer, in which ScpA and ScpB bind to the head domain of Smc. The presence of the three proteins is required for the association of the complex with DNA.

The protein resides in the cytoplasm. Its function is as follows. Participates in chromosomal partition during cell division. May act via the formation of a condensin-like complex containing Smc and ScpB that pull DNA away from mid-cell into both cell halves. The sequence is that of Segregation and condensation protein A from Lactobacillus gasseri (strain ATCC 33323 / DSM 20243 / BCRC 14619 / CIP 102991 / JCM 1131 / KCTC 3163 / NCIMB 11718 / NCTC 13722 / AM63).